A 460-amino-acid polypeptide reads, in one-letter code: Bifunctional protein GlmU (460 aa).

A pyrophosphorylase region spans residues Met-1–Pro-233. UDP-N-acetyl-alpha-D-glucosamine is bound by residues Lys-21, Gln-76, and Gly-81–Thr-82. Asp-105 serves as a coordination point for Mg(2+). UDP-N-acetyl-alpha-D-glucosamine-binding residues include Gly-140, Glu-158, and Asn-231. Asn-231 is a binding site for Mg(2+). Residues Leu-234–Ala-254 are linker. Residues Gly-255–Arg-460 are N-acetyltransferase. Residues Arg-337 and Lys-355 each contribute to the UDP-N-acetyl-alpha-D-glucosamine site. His-367 functions as the Proton acceptor in the catalytic mechanism. UDP-N-acetyl-alpha-D-glucosamine-binding residues include Tyr-370 and Asn-381. Acetyl-CoA contacts are provided by residues Ala-384, Asn-390–Tyr-391, Ser-409, Gly-427, and Arg-444.

The protein in the N-terminal section; belongs to the N-acetylglucosamine-1-phosphate uridyltransferase family. It in the C-terminal section; belongs to the transferase hexapeptide repeat family. Homotrimer. Requires Mg(2+) as cofactor.

The protein resides in the cytoplasm. The catalysed reaction is alpha-D-glucosamine 1-phosphate + acetyl-CoA = N-acetyl-alpha-D-glucosamine 1-phosphate + CoA + H(+). It catalyses the reaction N-acetyl-alpha-D-glucosamine 1-phosphate + UTP + H(+) = UDP-N-acetyl-alpha-D-glucosamine + diphosphate. It functions in the pathway nucleotide-sugar biosynthesis; UDP-N-acetyl-alpha-D-glucosamine biosynthesis; N-acetyl-alpha-D-glucosamine 1-phosphate from alpha-D-glucosamine 6-phosphate (route II): step 2/2. Its pathway is nucleotide-sugar biosynthesis; UDP-N-acetyl-alpha-D-glucosamine biosynthesis; UDP-N-acetyl-alpha-D-glucosamine from N-acetyl-alpha-D-glucosamine 1-phosphate: step 1/1. The protein operates within bacterial outer membrane biogenesis; LPS lipid A biosynthesis. Its function is as follows. Catalyzes the last two sequential reactions in the de novo biosynthetic pathway for UDP-N-acetylglucosamine (UDP-GlcNAc). The C-terminal domain catalyzes the transfer of acetyl group from acetyl coenzyme A to glucosamine-1-phosphate (GlcN-1-P) to produce N-acetylglucosamine-1-phosphate (GlcNAc-1-P), which is converted into UDP-GlcNAc by the transfer of uridine 5-monophosphate (from uridine 5-triphosphate), a reaction catalyzed by the N-terminal domain. This Methylibium petroleiphilum (strain ATCC BAA-1232 / LMG 22953 / PM1) protein is Bifunctional protein GlmU.